Consider the following 69-residue polypeptide: UPF0337 protein ECA0631 (69 aa).

The protein belongs to the UPF0337 (CsbD) family.

This chain is UPF0337 protein ECA0631, found in Pectobacterium atrosepticum (strain SCRI 1043 / ATCC BAA-672) (Erwinia carotovora subsp. atroseptica).